The primary structure comprises 62 residues: Beta-defensin 37 (62 aa).

The first 16 residues, 1 to 16 (MKFSYFLLLLLSLSNF), serve as a signal peptide directing secretion. 3 cysteine pairs are disulfide-bonded: C29/C58, C36/C51, and C41/C59.

It belongs to the beta-defensin family. As to expression, only expressed in epididymis (corpus and cauda).

It localises to the secreted. Has antibacterial activity. The chain is Beta-defensin 37 (Defb37) from Mus musculus (Mouse).